A 139-amino-acid chain; its full sequence is Large-conductance mechanosensitive channel (139 aa).

The next 2 membrane-spanning stretches (helical) occupy residues 19 to 39 (VAVIIGAAFGAIVSSMVADVI) and 81 to 101 (GNFLTLTLNFLIVAFVLFMVV).

This sequence belongs to the MscL family. Homopentamer.

Its subcellular location is the cell inner membrane. Channel that opens in response to stretch forces in the membrane lipid bilayer. May participate in the regulation of osmotic pressure changes within the cell. The polypeptide is Large-conductance mechanosensitive channel (Nitrobacter hamburgensis (strain DSM 10229 / NCIMB 13809 / X14)).